The primary structure comprises 260 residues: Ribosomal RNA small subunit methyltransferase G (260 aa).

S-adenosyl-L-methionine-binding positions include Gly94, Phe99, 117–119 (DSS), 145–146 (AE), and Arg164.

This sequence belongs to the methyltransferase superfamily. RNA methyltransferase RsmG family.

The protein resides in the cytoplasm. Specifically methylates the N7 position of a guanine in 16S rRNA. The chain is Ribosomal RNA small subunit methyltransferase G from Synechococcus sp. (strain JA-3-3Ab) (Cyanobacteria bacterium Yellowstone A-Prime).